We begin with the raw amino-acid sequence, 380 residues long: 3-isopropylmalate dehydratase large subunit (380 aa).

Residues C262, C320, and C323 each coordinate [4Fe-4S] cluster.

It belongs to the aconitase/IPM isomerase family. LeuC type 2 subfamily. As to quaternary structure, heterodimer of LeuC and LeuD. [4Fe-4S] cluster serves as cofactor.

It carries out the reaction (2R,3S)-3-isopropylmalate = (2S)-2-isopropylmalate. It participates in amino-acid biosynthesis; L-leucine biosynthesis; L-leucine from 3-methyl-2-oxobutanoate: step 2/4. Its function is as follows. Catalyzes the isomerization between 2-isopropylmalate and 3-isopropylmalate, via the formation of 2-isopropylmaleate. This Pyrococcus horikoshii (strain ATCC 700860 / DSM 12428 / JCM 9974 / NBRC 100139 / OT-3) protein is 3-isopropylmalate dehydratase large subunit.